The following is a 103-amino-acid chain: Interleukin-8 (103 aa).

Residues 1-25 form the signal peptide; that stretch reads MTSKLAVAFLAVFLLSAALCEAAVL. Citrulline is present on R27. 2 disulfide bridges follow: C34–C61 and C36–C77.

It belongs to the intercrine alpha (chemokine CxC) family. Homodimer. Interacts with TNFAIP6 (via Link domain); this interaction interferes with chemokine binding to glycosaminoglycans. In terms of processing, citrullination at Arg-27 prevents proteolysis, and dampens tissue inflammation, it also enhances leukocytosis, possibly through impaired chemokine clearance from the blood circulation. As to expression, alveolar macrophages.

It is found in the secreted. In terms of biological role, chemotactic factor that mediates inflammatory response by attracting neutrophils, basophils, and T-cells to clear pathogens and protect the host from infection. Also plays an important role in neutrophil activation. Released in response to an inflammatory stimulus, exerts its effect by binding to the G-protein-coupled receptors CXCR1 and CXCR2, primarily found in neutrophils, monocytes and endothelial cells. G-protein heterotrimer (alpha, beta, gamma subunits) constitutively binds to CXCR1/CXCR2 receptor and activation by IL8 leads to beta and gamma subunits release from Galpha (GNAI2 in neutrophils) and activation of several downstream signaling pathways including PI3K and MAPK pathways. The polypeptide is Interleukin-8 (CXCL8) (Sus scrofa (Pig)).